The primary structure comprises 229 residues: Potassium/proton antiporter CemA (229 aa).

The next 3 membrane-spanning stretches (helical) occupy residues 7–27 (FTPL…SFSV), 107–127 (ILHF…SILG), and 189–209 (IISG…KYWI).

The protein belongs to the CemA family.

Its subcellular location is the plastid. The protein resides in the chloroplast inner membrane. The catalysed reaction is K(+)(in) + H(+)(out) = K(+)(out) + H(+)(in). Its function is as follows. Contributes to K(+)/H(+) antiport activity by supporting proton efflux to control proton extrusion and homeostasis in chloroplasts in a light-dependent manner to modulate photosynthesis. Prevents excessive induction of non-photochemical quenching (NPQ) under continuous-light conditions. Indirectly promotes efficient inorganic carbon uptake into chloroplasts. The sequence is that of Potassium/proton antiporter CemA from Nicotiana tomentosiformis (Tobacco).